The chain runs to 316 residues: MGKLIRRTSLTSKIINLPIDYFIYVCEQFDSVEWDKVSDRYSIPFSLAVNFIFLLMRIYIKSTHVPVQRNQLFVDKQSINTSRSWFRAFLSFLSICFLFISFLNFIFSTRFQNKLYRTLPQDKRTTTSTPNVKPVFQHSNNDDGDEQVFELKVWSPNQFLLNFACLFSPAHALILWFYSTSLRVTLLTFLLSFTTLHFVNKFSLLLKDQQYLHRQVFFEYDKKFVEPRLSVVKRDVAINTTRGPTTASIEYFTPRKPIDTFLEHRSSSHDHLTSTPRTPIALQRRSVHHLHDSGISRDSSSPFKRFPHLSDGSSRF.

4 consecutive transmembrane segments (helical) span residues 41-61, 88-108, 159-179, and 186-206; these read YSIP…IYIK, AFLS…FIFS, FLLN…WFYS, and LLTF…SLLL. The tract at residues 291-316 is disordered; that stretch reads HDSGISRDSSSPFKRFPHLSDGSSRF.

Its subcellular location is the endoplasmic reticulum membrane. Its function is as follows. Has a role in meiosis. This Schizosaccharomyces pombe (strain 972 / ATCC 24843) (Fission yeast) protein is Meiotically up-regulated gene 154 protein (mug154).